Here is a 387-residue protein sequence, read N- to C-terminus: Polyphosphate kinase (387 aa).

Residues arginine 347 and arginine 377 each contribute to the Mg(2+) site.

It belongs to the polyphosphate kinase 1 (PPK1) family. Mg(2+) is required as a cofactor. In terms of processing, an intermediate of this reaction is the autophosphorylated ppk in which a phosphate is covalently linked to a histidine residue through a N-P bond.

It carries out the reaction [phosphate](n) + ATP = [phosphate](n+1) + ADP. In terms of biological role, catalyzes the reversible transfer of the terminal phosphate of ATP to form a long-chain polyphosphate (polyP). The polypeptide is Polyphosphate kinase (ppk) (Aphanizomenon baltica).